Here is a 248-residue protein sequence, read N- to C-terminus: Aquaporin TIP2-3 (248 aa).

2 helical membrane-spanning segments follow: residues 20 to 40 (AYVA…GSAI) and 54 to 74 (AGLV…VSMA). An NPA 1 motif is present at residues 83-85 (NPA). A run of 3 helical transmembrane segments spans residues 97-119 (TILT…CFLL), 141-161 (GVVM…ATAA), and 168-188 (LGTI…LAAG). An NPA 2 motif is present at residues 196 to 198 (NPA). The helical transmembrane segment at 217-237 (WVGPLVGGGLAGLVYGDVFIA) threads the bilayer.

The protein belongs to the MIP/aquaporin (TC 1.A.8) family. TIP (TC 1.A.8.10) subfamily. Specifically expressed in roots.

Its subcellular location is the cell membrane. Water channel required to facilitate the transport of water across cell membrane. In Zea mays (Maize), this protein is Aquaporin TIP2-3 (TIP2-3).